The following is a 101-amino-acid chain: NADH-quinone oxidoreductase subunit K (101 aa).

Helical transmembrane passes span 4–24 (LSDY…GIFV), 29–49 (IITL…NFVA), and 61–81 (IFVF…LAIL).

It belongs to the complex I subunit 4L family. NDH-1 is composed of 14 different subunits. Subunits NuoA, H, J, K, L, M, N constitute the membrane sector of the complex.

The protein resides in the cell inner membrane. The enzyme catalyses a quinone + NADH + 5 H(+)(in) = a quinol + NAD(+) + 4 H(+)(out). Functionally, NDH-1 shuttles electrons from NADH, via FMN and iron-sulfur (Fe-S) centers, to quinones in the respiratory chain. The immediate electron acceptor for the enzyme in this species is believed to be ubiquinone. Couples the redox reaction to proton translocation (for every two electrons transferred, four hydrogen ions are translocated across the cytoplasmic membrane), and thus conserves the redox energy in a proton gradient. The chain is NADH-quinone oxidoreductase subunit K from Ruthia magnifica subsp. Calyptogena magnifica.